The sequence spans 1495 residues: Ras GTPase-activating-like protein IQG1 (1495 aa).

The 114-residue stretch at Leu108–Trp221 folds into the Calponin-homology (CH) domain. Thr264 is modified (phosphothreonine). Ser268 is subject to Phosphoserine. Thr299 is subject to Phosphothreonine. 7 IQ domains span residues Glu447–Ser467, Ser538–Asp567, Glu568–Asp597, His599–Lys628, Glu629–Asn658, Glu687–Arg716, and Asn717–Pro746. A coiled-coil region spans residues Asn759–Ile798. The Ras-GAP domain occupies Ser876 to Val1100.

As to quaternary structure, interacts with AFR1. Interacts with AKR1. Interacts with activated CDC42. Interacts with calmodulin CMD1. Interacts with myosin MYO1 and its light chain MLC1. Interacts with BUD4. Interacts with INN1. Interacts with SEC3. Interacts with TEM1.

The protein localises to the bud neck. Required for the assembly and the contraction of the actomyosin ring at the bud neck during cytokinesis. Seems to be involved in additional tasks during cell division like axial bud-site selection and targeted secretion by recruiting the spatial landmark BUD4, the septin CDC12 and the secretion landmark SEC3 to the bud neck. May be regulated by calcium ions. In Saccharomyces cerevisiae (strain ATCC 204508 / S288c) (Baker's yeast), this protein is Ras GTPase-activating-like protein IQG1 (IQG1).